A 340-amino-acid polypeptide reads, in one-letter code: Phosphoribosylformylglycinamidine cyclo-ligase (340 aa).

It belongs to the AIR synthase family.

The protein resides in the cytoplasm. It catalyses the reaction 2-formamido-N(1)-(5-O-phospho-beta-D-ribosyl)acetamidine + ATP = 5-amino-1-(5-phospho-beta-D-ribosyl)imidazole + ADP + phosphate + H(+). It functions in the pathway purine metabolism; IMP biosynthesis via de novo pathway; 5-amino-1-(5-phospho-D-ribosyl)imidazole from N(2)-formyl-N(1)-(5-phospho-D-ribosyl)glycinamide: step 2/2. In Streptococcus uberis (strain ATCC BAA-854 / 0140J), this protein is Phosphoribosylformylglycinamidine cyclo-ligase.